A 309-amino-acid polypeptide reads, in one-letter code: Ornithine carbamoyltransferase (309 aa).

Residues S51 to T54, Q78, R102, and H129 to Q132 contribute to the carbamoyl phosphate site. Residues N160, D224, and S228–M229 each bind L-ornithine. Carbamoyl phosphate is bound by residues C264–L265 and R292.

Belongs to the aspartate/ornithine carbamoyltransferase superfamily. OTCase family.

The protein localises to the cytoplasm. The enzyme catalyses carbamoyl phosphate + L-ornithine = L-citrulline + phosphate + H(+). It functions in the pathway amino-acid biosynthesis; L-arginine biosynthesis; L-arginine from L-ornithine and carbamoyl phosphate: step 1/3. Its function is as follows. Reversibly catalyzes the transfer of the carbamoyl group from carbamoyl phosphate (CP) to the N(epsilon) atom of ornithine (ORN) to produce L-citrulline. The polypeptide is Ornithine carbamoyltransferase (Campylobacter fetus subsp. fetus (strain 82-40)).